The primary structure comprises 352 residues: Protein RecA (352 aa).

G65–T72 is a binding site for ATP. The tract at residues V333–I352 is disordered. A compositionally biased stretch (acidic residues) spans E343–I352.

Belongs to the RecA family.

It localises to the cytoplasm. Can catalyze the hydrolysis of ATP in the presence of single-stranded DNA, the ATP-dependent uptake of single-stranded DNA by duplex DNA, and the ATP-dependent hybridization of homologous single-stranded DNAs. It interacts with LexA causing its activation and leading to its autocatalytic cleavage. This is Protein RecA from Pseudomonas fluorescens.